We begin with the raw amino-acid sequence, 251 residues long: MNLNSIPAFDDNYIWVLNDEAGRCLIVDPGDAEPVLNAIAANNWQPEAIFLTHHHHDHVGGVKELVKKFPQIVVYGPQETQDKGTTQVVKDGETAFVLGHEFSVIATPGHTLGHICYFSKPYLFCGDTLFSGGCGRLFEGTASQMYQSLKKLSALPDDTLVCCAHEYTLSNMKFALSILPHDLSINDYYRKVKELRAKNQITLPVILKNERQINVFLRTEDIDLINVINEETLLQQPEERFAWLRSKKDRF.

Residues histidine 53, histidine 55, aspartate 57, histidine 58, histidine 110, aspartate 127, and histidine 165 each contribute to the Zn(2+) site.

It belongs to the metallo-beta-lactamase superfamily. Glyoxalase II family. As to quaternary structure, monomer. Zn(2+) serves as cofactor.

It catalyses the reaction an S-(2-hydroxyacyl)glutathione + H2O = a 2-hydroxy carboxylate + glutathione + H(+). It participates in secondary metabolite metabolism; methylglyoxal degradation; (R)-lactate from methylglyoxal: step 2/2. Its function is as follows. Thiolesterase that catalyzes the hydrolysis of S-D-lactoyl-glutathione to form glutathione and D-lactic acid. This is Hydroxyacylglutathione hydrolase from Escherichia coli (strain SMS-3-5 / SECEC).